The following is a 377-amino-acid chain: Cytochrome c peroxidase, mitochondrial (377 aa).

The N-terminal 32 residues, 1 to 32, are a transit peptide targeting the mitochondrion; sequence MSFRAPNLIRSTVGRRAGQTLNLRSQVIRRRF. Histidine 138 serves as the catalytic Proton acceptor. Residue histidine 261 coordinates heme b. Tryptophan 277 acts as the Tryptophan radical intermediate in catalysis.

This sequence belongs to the peroxidase family. Cytochrome c peroxidase subfamily. In terms of assembly, forms a one-to-one complex with cytochrome c. Interacts with MID1 (via C-terminus); the interaction may contribute to cellular detoxification of radicals. Requires heme b as cofactor.

It is found in the mitochondrion matrix. Its subcellular location is the mitochondrion intermembrane space. The enzyme catalyses 2 Fe(II)-[cytochrome c] + H2O2 + 2 H(+) = 2 Fe(III)-[cytochrome c] + 2 H2O. Functionally, destroys radicals which are normally produced within the cells and which are toxic to biological systems. This is Cytochrome c peroxidase, mitochondrial (CCP1) from Cryptococcus neoformans var. grubii serotype A (strain H99 / ATCC 208821 / CBS 10515 / FGSC 9487) (Filobasidiella neoformans var. grubii).